Reading from the N-terminus, the 66-residue chain is Ornithorhynchus venom defensin-like peptide A (66 aa).

Positions 1 to 22 (MRLTYLLLLLVAVLFQAGSGSA) are cleaved as a signal peptide. Residues 23-24 (EP) constitute a propeptide that is removed on maturation. 3 disulfides stabilise this stretch: C33–C63, C40–C56, and C48–C64.

Produced by the crural gland and detected in venom from the spur located on each male hind leg. Is the only OvDLP that is expressed in venom gland alone.

It localises to the secreted. In terms of biological role, does not show antimicrobial, myotoxic, hemolytic and cell-promoting activities. The protein is Ornithorhynchus venom defensin-like peptide A of Ornithorhynchus anatinus (Duckbill platypus).